The sequence spans 278 residues: Transcriptional regulator ICP22 homolog (278 aa).

2 disordered regions span residues 1–42 (MFCT…RDTS) and 154–229 (CDVS…KRPQ). The segment at 1–142 (MFCTSPATRG…PRGEDGFIEA (142 aa)) is IE62-binding. Composition is skewed to acidic residues over residues 155–169 (DVSD…DDDG) and 183–205 (AESS…DSCE).

This sequence belongs to the herpesviridae ICP22 family. In terms of assembly, interacts with IE62; this interaction modulates the function of IE62. Interacts with several components of host pre-initiation complex including GTF2E1, GTF2H2 and POLR2A; these interactions lead to repression of gene transcription. Interacts with host ASF1A; altering its ability to bind histones. Post-translationally, phosphorylated in vitro by host and by protein kinase ORF47.

The protein resides in the host cytoplasm. It is found in the host nucleus. Its subcellular location is the virion tegument. In terms of biological role, immediate early (EI) protein that functions as a transcriptional regulator of cellular and viral mRNAs mainly by interacting with several general transcription factors thereby disorganizing the preinitiation complex at certain promoters. May additionally help to regulate levels of histones in virus-infected cells by interacting with host ASF1. By inhibiting host transcriptional program, IE63 plays a major role in the ability of VZV to overcome the innate immune response to the virus. This Varicella-zoster virus (strain Dumas) (HHV-3) protein is Transcriptional regulator ICP22 homolog.